The primary structure comprises 101 residues: NAD(P)H-quinone oxidoreductase subunit 4L, chloroplastic (101 aa).

A run of 3 helical transmembrane segments spans residues Tyr-2–Leu-22, Met-32–Ile-52, and Val-61–Val-81.

It belongs to the complex I subunit 4L family. As to quaternary structure, NDH is composed of at least 16 different subunits, 5 of which are encoded in the nucleus.

The protein resides in the plastid. Its subcellular location is the chloroplast thylakoid membrane. The enzyme catalyses a plastoquinone + NADH + (n+1) H(+)(in) = a plastoquinol + NAD(+) + n H(+)(out). It catalyses the reaction a plastoquinone + NADPH + (n+1) H(+)(in) = a plastoquinol + NADP(+) + n H(+)(out). NDH shuttles electrons from NAD(P)H:plastoquinone, via FMN and iron-sulfur (Fe-S) centers, to quinones in the photosynthetic chain and possibly in a chloroplast respiratory chain. The immediate electron acceptor for the enzyme in this species is believed to be plastoquinone. Couples the redox reaction to proton translocation, and thus conserves the redox energy in a proton gradient. In Mesostigma viride (Green alga), this protein is NAD(P)H-quinone oxidoreductase subunit 4L, chloroplastic.